A 190-amino-acid chain; its full sequence is Elongation factor P-like protein (190 aa).

The protein belongs to the elongation factor P family.

The sequence is that of Elongation factor P-like protein from Escherichia fergusonii (strain ATCC 35469 / DSM 13698 / CCUG 18766 / IAM 14443 / JCM 21226 / LMG 7866 / NBRC 102419 / NCTC 12128 / CDC 0568-73).